Here is a 411-residue protein sequence, read N- to C-terminus: MRAERTSFLLALGLLVAGIRSVHCLPENVVVKDQHRRVDGHTLASSNTDFAFSLYKQLALKNPNKNVILSPLSVSIALAFLSLGARGSTLTEILEGLKFNLTEIQEKEIHHSFQHLLQALNQPSNQLQLSVGNAMFVQEELKLLDKFIEDAQVLYSSEAFPTNFRDSEAARSLINDYVKNKTQGKIEELFKYLSPRTELVLVNYIYFKAQWKTPFDPKHTEQAEFHVSDNKTVEVPMMTLDLETPYFRDEELGCTLVELTYTSNDSALFILPDEGKMRDLEAKLTPETLTRWRNSLQPRRIHELYLPKFSIKSNYELNDILSQLGIRKIFANADLSGITGTADLVVSQVVHGAALDVDEEGTEGVAATGIGIERTFLRIIVRVNRPFLIAVVLKDTQSIIFLGKVTNPSEA.

Residues 1 to 24 form the signal peptide; it reads MRAERTSFLLALGLLVAGIRSVHC. Asn-100, Asn-180, Asn-230, and Asn-264 each carry an N-linked (GlcNAc...) asparagine glycan.

The protein belongs to the serpin family. In terms of assembly, homodimer.

It is found in the cytoplasmic vesicle. The protein resides in the secretory vesicle. It localises to the chromaffin granule. The protein localises to the secreted. Functionally, serine protease inhibitor. This is Serpin A3-2 from Bos taurus (Bovine).